Consider the following 327-residue polypeptide: Putative cyclin-dependent kinase F-2 (327 aa).

The Protein kinase domain maps to Tyr4 to Phe295. ATP-binding positions include Ile10–Val18 and Lys33. Residue Asp134 is the Proton acceptor of the active site. Thr167 is modified (phosphothreonine).

It belongs to the protein kinase superfamily. CMGC Ser/Thr protein kinase family. CDC2/CDKX subfamily.

It catalyses the reaction L-seryl-[protein] + ATP = O-phospho-L-seryl-[protein] + ADP + H(+). It carries out the reaction L-threonyl-[protein] + ATP = O-phospho-L-threonyl-[protein] + ADP + H(+). The enzyme catalyses [DNA-directed RNA polymerase] + ATP = phospho-[DNA-directed RNA polymerase] + ADP + H(+). This is Putative cyclin-dependent kinase F-2 (CDKF-2) from Oryza sativa subsp. japonica (Rice).